The primary structure comprises 1333 residues: Xanthine dehydrogenase/oxidase (1333 aa).

One can recognise a 2Fe-2S ferredoxin-type domain in the interval 4 to 91; it reads DKLVFFVNGR…HVAVTTVEGI (88 aa). [2Fe-2S] cluster is bound by residues Cys-43, Cys-48, Cys-51, Cys-73, Cys-113, Cys-116, Cys-148, and Cys-150. Residues 229-414 form the FAD-binding PCMH-type domain; it reads FEGERVTWIQ…LSIEIPYSRE (186 aa). FAD-binding positions include 257–264, Phe-337, 347–351, Asp-360, Leu-404, and Lys-422; these read LVVGNTEI and SVGGN. Cystine bridges form between Cys-509–Cys-1318 and Cys-536–Cys-993. Residues Gln-768 and Phe-799 each coordinate Mo-molybdopterin. Residues Glu-803 and Arg-881 each contribute to the substrate site. Residue Arg-913 participates in Mo-molybdopterin binding. Residues Phe-915 and Thr-1011 each coordinate substrate. Residue Ala-1080 participates in Mo-molybdopterin binding. Glu-1262 serves as the catalytic Proton acceptor.

The protein belongs to the xanthine dehydrogenase family. Homodimer. Interacts with BTN1A1. [2Fe-2S] cluster serves as cofactor. The cofactor is FAD. It depends on Mo-molybdopterin as a cofactor. Subject to partial proteolysis; this alters the enzyme from the dehydrogenase form (D) to the oxidase form (O). In terms of processing, contains sulfhydryl groups that are easily oxidized (in vitro); this alters the enzyme from the dehydrogenase form (D) to the oxidase form (O). As to expression, detected in milk (at protein level).

It is found in the cytoplasm. The protein localises to the peroxisome. Its subcellular location is the secreted. The catalysed reaction is xanthine + NAD(+) + H2O = urate + NADH + H(+). It carries out the reaction hypoxanthine + NAD(+) + H2O = xanthine + NADH + H(+). The enzyme catalyses xanthine + O2 + H2O = urate + H2O2. With respect to regulation, can be converted from the dehydrogenase form (D) to the oxidase form (O) irreversibly by proteolysis or reversibly through the oxidation of sulfhydryl groups. Functionally, key enzyme in purine degradation. Catalyzes the oxidation of hypoxanthine to xanthine. Catalyzes the oxidation of xanthine to uric acid. Contributes to the generation of reactive oxygen species. Has also low oxidase activity towards aldehydes (in vitro). This is Xanthine dehydrogenase/oxidase (XDH) from Homo sapiens (Human).